We begin with the raw amino-acid sequence, 490 residues long: Glutamate--tRNA ligase (490 aa).

The 'HIGH' region motif lies at 9-19 (PSPTGLQHIGG). The short motif at 251-255 (KLSKR) is the 'KMSKS' region element. Residue K254 participates in ATP binding.

It belongs to the class-I aminoacyl-tRNA synthetase family. Glutamate--tRNA ligase type 1 subfamily. In terms of assembly, monomer.

The protein localises to the cytoplasm. The catalysed reaction is tRNA(Glu) + L-glutamate + ATP = L-glutamyl-tRNA(Glu) + AMP + diphosphate. Catalyzes the attachment of glutamate to tRNA(Glu) in a two-step reaction: glutamate is first activated by ATP to form Glu-AMP and then transferred to the acceptor end of tRNA(Glu). The chain is Glutamate--tRNA ligase from Borreliella afzelii (strain PKo) (Borrelia afzelii).